The primary structure comprises 1093 residues: Synaptopodin-2 (1093 aa).

Positions Met1–Glu180 are interaction with VPS18. The 83-residue stretch at Phe6–Ser88 folds into the PDZ domain. 2 disordered regions span residues Glu144–Gln174 and Ala211–Leu233. The segment covering Glu222–Leu233 has biased composition (basic and acidic residues). Ser274, Ser310, Ser329, and Ser330 each carry phosphoserine. The segment at Ser329–Val369 is disordered. Thr333 bears the Phosphothreonine mark. Basic residues predominate over residues Ser346–Leu358. The span at Arg359–Val369 shows a compositional bias: basic and acidic residues. The Nuclear localization signal motif lies at Lys398–Lys406. Interaction with ACTN2 stretches follow at residues Met481–Ser663, Ser664–Ala924, and Gln901–Glu1093. Disordered regions lie at residues Ala507–Val803 and Ala834–Gly870. F-actin binding stretches follow at residues Thr534–Ser663 and Ser664–Val803. Ser548, Ser549, and Ser551 each carry phosphoserine. Composition is skewed to polar residues over residues Pro565 to Ile579 and Ser595 to Ser611. Ser604 is subject to Phosphoserine. The interval Arg607–Pro811 is interaction with YWHAB. Thr610 is modified (phosphothreonine). The residue at position 611 (Ser611) is a Phosphoserine. Residues Asp615–Thr626 form an interaction with BAG3 region. 2 stretches are compositionally biased toward pro residues: residues Pro617–Asp630 and Ala644–Trp655. Positions Pro619–Tyr622 match the PPPY motif motif. Residue Tyr622 is modified to Phosphotyrosine. Phosphothreonine is present on Thr626. Positions Ser663–Ile674 are enriched in basic and acidic residues. Residues Ser664–Asn916 form an F-actin bundling activity region. Phosphoserine is present on residues Ser705 and Ser729. The actin binding stretch occupies residues Ala751–Ala900. Phosphothreonine is present on residues Thr755 and Thr774. Low complexity predominate over residues Lys762–Val784. 2 positions are modified to phosphoserine: Ser777 and Ser781. Polar residues-rich tracts occupy residues Pro793–Val803 and Val835–Ala853. The interaction with FLNC stretch occupies residues Gln810 to Glu1093. 3 positions are modified to phosphoserine: Ser902, Ser906, and Ser910. Residues Ala937–Lys956 form a disordered region. Residues Leu1000 to Val1019 form an interaction with ZYX region. Phosphoserine is present on Ser1015. The segment covering Ser1041–Pro1050 has biased composition (low complexity). The segment at Ser1041 to Ser1064 is disordered. Position 1056 is a phosphoserine (Ser1056).

This sequence belongs to the synaptopodin family. May self-associate in muscle cells under oxidative stress. Binds F-actin. Interacts with ACTN2; ACTN2 is proposed to anchor SYOP2 at Z lines in mature myocytes. Interacts with AKAP6, PPP3CA and CAMK2A. Interacts (phosphorylated form) with YWHAB; YWHAB competes with ACTN2 for interaction with SYNPO2. Interacts with KPNA2; mediating nuclear import of SYNOP2; dependent on interaction with YWHAB. Interacts with IPO13; may be implicated in SYNOP2 nuclear import. Interacts with ZYX, FLNC, ILK. Interacts with BAG3 (via WW 1 domain). May associate with the CASA complex consisting of HSPA8, HSPB8 and BAG3. Interacts with VPS18. In terms of processing, phosphorylated by PKA, and by CaMK2 at multiple sites. Dephosphorylated by calcineurin; abrogating interaction with YWHAB and impairing nuclear import. Phosphorylated by ILK. Expressed in heart muscle. Isoform 5 is specifically expressed in skeletal muscle.

The protein resides in the nucleus. It localises to the cytoplasm. Its subcellular location is the cytoskeleton. It is found in the myofibril. The protein localises to the sarcomere. The protein resides in the z line. It localises to the cell junction. Its subcellular location is the focal adhesion. Functionally, has an actin-binding and actin-bundling activity. Can induce the formation of F-actin networks in an isoform-specific manner. At the sarcomeric Z lines is proposed to act as adapter protein that links nascent myofibers to the sarcolemma via ZYX and may play a role in early assembly and stabilization of the Z lines. Involved in autophagosome formation. May play a role in chaperone-assisted selective autophagy (CASA) involved in Z lines maintenance in striated muscle under mechanical tension; may link the client-processing CASA chaperone machinery to a membrane-tethering and fusion complex providing autophagosome membranes. Involved in regulation of cell migration. May be a tumor suppressor. In terms of biological role, involved in regulation of cell migration. Can induce formation of thick, irregular actin bundles in the cell body. Its function is as follows. Involved in regulation of cell migration. Can induce long, well-organized actin bundles frequently orientated in parallel along the long axis of the cell showing characteristics of contractile ventral stress fibers. Involved in regulation of cell migration. Can induce an amorphous actin meshwork throughout the cell body containing a mixture of long and short, randomly organized thick and thin actin bundles. Functionally, can induce long, well-organized actin bundles frequently orientated in parallel along the long axis of the cell showing characteristics of contractile ventral stress fibers. In terms of biological role, involved in regulation of cell migration in part dependent on the Rho-ROCK cascade; can promote formation of nascent focal adhesions, actin bundles at the leading cell edge and lamellipodia. Can induce formation of thick, irregular actin bundles in the cell body; the induced actin network is associated with enhanced cell migration in vitro. The polypeptide is Synaptopodin-2 (SYNPO2) (Homo sapiens (Human)).